Consider the following 827-residue polypeptide: Beta-galactosidase 2 (827 aa).

The signal sequence occupies residues 1–24 (MAASAVAVAFVVAVAAVLAAAASA). Glu-182 (proton donor) is an active-site residue. Residue Asn-209 is glycosylated (N-linked (GlcNAc...) asparagine). Glu-251 serves as the catalytic Nucleophile. N-linked (GlcNAc...) asparagine glycosylation is present at Asn-458. Residues 741-827 (DYEKAKVHLQ…KRAVVEAICG (87 aa)) enclose the SUEL-type lectin domain.

The protein belongs to the glycosyl hydrolase 35 family.

It is found in the secreted. It localises to the extracellular space. Its subcellular location is the apoplast. The catalysed reaction is Hydrolysis of terminal non-reducing beta-D-galactose residues in beta-D-galactosides.. The sequence is that of Beta-galactosidase 2 from Oryza sativa subsp. japonica (Rice).